The primary structure comprises 158 residues: Endoribonuclease YbeY (158 aa).

Zn(2+)-binding residues include H119, H123, and H129.

Belongs to the endoribonuclease YbeY family. Zn(2+) serves as cofactor.

The protein localises to the cytoplasm. Functionally, single strand-specific metallo-endoribonuclease involved in late-stage 70S ribosome quality control and in maturation of the 3' terminus of the 16S rRNA. The sequence is that of Endoribonuclease YbeY from Shewanella sediminis (strain HAW-EB3).